The sequence spans 546 residues: Phosphatidylinositol 4-phosphate 5-kinase type-1 alpha (546 aa).

A PIPK domain is found at Thr65 to Val433. Lys87 is covalently cross-linked (Glycyl lysine isopeptide (Lys-Gly) (interchain with G-Cter in ubiquitin)). Residues Pro441–Gly522 are disordered. Positions Ser449 to Gly461 are enriched in low complexity. Over residues Asn462–Ala471 the composition is skewed to polar residues. Residues Gly473–Arg493 show a composition bias toward basic and acidic residues.

As to quaternary structure, interacts with RAC1. Interacts with TUT1. Forms a complex with CDH1/E-cadherin, CTNNB1/beta-catenin and CTNND1 at the plasma membrane upon calcium stimulation. Found in a ternary complex with IRS1 and DGKZ in the absence of insulin stimulation. Interacts with DGKZ. Interacts with PIP4K2C; the interaction inhibits PIP5K1A kinase activity.

The protein localises to the cell membrane. It is found in the cytoplasm. It localises to the nucleus. The protein resides in the nucleus speckle. Its subcellular location is the cell projection. The protein localises to the ruffle. It is found in the lamellipodium. It catalyses the reaction a 1,2-diacyl-sn-glycero-3-phospho-(1D-myo-inositol 4-phosphate) + ATP = a 1,2-diacyl-sn-glycero-3-phospho-(1D-myo-inositol-4,5-bisphosphate) + ADP + H(+). The enzyme catalyses 1-octadecanoyl-2-(5Z,8Z,11Z,14Z)-eicosatetraenoyl-sn-glycero-3-phospho-1D-myo-inositol 4-phosphate + ATP = 1-octadecanoyl-2-(5Z,8Z,11Z,14Z)-eicosatetraenoyl-sn-glycero-3-phospho-1D-myo-inositol 4,5-bisphosphate + ADP + H(+). The catalysed reaction is 1,2-dihexadecanoyl-sn-glycero-3-phospho-(1D-myo-inositol-4-phosphate) + ATP = 1,2-dihexadecanoyl-sn-glycero-3-phospho-(1D-myo-inositol-4,5-bisphosphate) + ADP + H(+). It carries out the reaction 1-octadecanoyl-2-(9Z)-octadecenoyl-sn-glycero-3-phospho-1D-myo-inositol 4-phosphate + ATP = 1-octadecanoyl-2-(9Z)-octadecenoyl-sn-glycero-3-phospho-1D-myo-inositol 4,5-bisphosphate + ADP + H(+). It catalyses the reaction 1-octadecanoyl-2-(9Z)-octadecenoyl-sn-glycero-3-phospho-1D-myo-inositol + ATP = 1-octadecanoyl-2-(9Z)-octadecenoyl-sn-glycero-3-phospho-1D-myo-inositol 5-phosphate + ADP + H(+). The enzyme catalyses 1-octadecanoyl-2-(9Z,12Z)-octadecadienoyl-sn-glycero-3-phospho-1D-myo-inositol + ATP = 1-octadecanoyl-2-(9Z,12Z)-octadecadienoyl-sn-glycero-3-phospho-1D-myo-inositol 5-phosphate + ADP + H(+). The catalysed reaction is 1-octadecanoyl-2-(5Z,8Z,11Z,14Z-eicosatetraenoyl)-sn-glycero-3-phospho-(1D-myo-inositol) + ATP = 1-octadecanoyl-2-(5Z,8Z,11Z,14Z)-eicosatetraenoyl-sn-glycero-3-phospho-1D-myo-inositol 5-phosphate + ADP + H(+). It carries out the reaction 1,2-di-(9Z,12Z)-octadecadienoyl-sn-glycero-3-phospho-1D-myo-inositol + ATP = 1,2-di(9Z,12Z)-octadecadienoyl-sn-glycero-3-phospho-1D-myo-inositol 5-phosphate + ADP + H(+). Its function is as follows. Catalyzes the phosphorylation of phosphatidylinositol 4-phosphate (PtdIns(4)P/PI4P) to form phosphatidylinositol 4,5-bisphosphate (PtdIns(4,5)P2/PIP2), a lipid second messenger that regulates several cellular processes such as signal transduction, vesicle trafficking, actin cytoskeleton dynamics, cell adhesion, and cell motility. PtdIns(4,5)P2 can directly act as a second messenger or can be utilized as a precursor to generate other second messengers: inositol 1,4,5-trisphosphate (IP3), diacylglycerol (DAG) or phosphatidylinositol-3,4,5-trisphosphate (PtdIns(3,4,5)P3/PIP3). PIP5K1A-mediated phosphorylation of PtdIns(4)P is the predominant pathway for PtdIns(4,5)P2 synthesis. Can also use phosphatidylinositol (PtdIns) as substrate in vitro. Together with PIP5K1C, is required for phagocytosis, both enzymes regulating different types of actin remodeling at sequential steps. Promotes particle ingestion by activating the WAS GTPase-binding protein that induces Arp2/3 dependent actin polymerization at the nascent phagocytic cup. Together with PIP5K1B, is required, after stimulation by G-protein coupled receptors, for the synthesis of IP3 that will induce stable platelet adhesion. Recruited to the plasma membrane by the E-cadherin/beta-catenin complex where it provides the substrate PtdIns(4,5)P2 for the production of PtdIns(3,4,5)P3, IP3 and DAG, that will mobilize internal calcium and drive keratinocyte differentiation. Positively regulates insulin-induced translocation of SLC2A4 to the cell membrane in adipocytes. Together with PIP5K1C has a role during embryogenesis. Independently of its catalytic activity, is required for membrane ruffling formation, actin organization and focal adhesion formation during directional cell migration by controlling integrin-induced translocation of the small GTPase RAC1 to the plasma membrane. Also functions in the nucleus where it acts as an activator of TUT1 adenylyltransferase activity in nuclear speckles, thereby regulating mRNA polyadenylation of a select set of mRNAs. This chain is Phosphatidylinositol 4-phosphate 5-kinase type-1 alpha, found in Rattus norvegicus (Rat).